Here is a 488-residue protein sequence, read N- to C-terminus: R3H and coiled-coil domain-containing protein 1 (488 aa).

One can recognise an R3H domain in the interval 16–81; that stretch reads NDFVHRVQEE…KRRTVICHLD (66 aa). Disordered stretches follow at residues 87 to 180 and 195 to 322; these read SDGP…GDAE and KSPD…DADH. Positions 114–125 are enriched in low complexity; it reads GAAAGPRGAPAG. The residue at position 232 (S232) is a Phosphoserine. A coiled-coil region spans residues 244 to 321; it reads SHGMRSLVDQ…EEDEDEADAD (78 aa). The span at 252–265 shows a compositional bias: acidic residues; it reads DQEEEEIEGEEEEK. Basic and acidic residues-rich tracts occupy residues 266–280 and 287–301; these read VDEK…KERV and TDAQ…GERM. The span at 302–319 shows a compositional bias: acidic residues; the sequence is DEGEDKVDAEEEDEDEAD.

The protein is R3H and coiled-coil domain-containing protein 1 of Mus musculus (Mouse).